A 274-amino-acid polypeptide reads, in one-letter code: SPbeta prophage-derived UPF0714 protein YoqZ (274 aa).

This sequence belongs to the UPF0714 family.

The protein is SPbeta prophage-derived UPF0714 protein YoqZ (yoqZ) of Bacillus subtilis (strain 168).